A 252-amino-acid polypeptide reads, in one-letter code: Body wall muscle protein HR-29 (252 aa).

Serine 2 bears the N-acetylserine mark. Tandem repeats lie at residues 37-55 (RDWM…RDLS), 56-74 (QDWM…RDLS), and 75-93 (QDWM…RNLS). Positions 37–93 (RDWMTTPYSSTGIGRRDLSQDWMTTPYTPAGVGRRDLSQDWMTTPYTSKGIGSRNLS) are 3 X 19 AA approximate tandem repeats. Residues 138-249 (ISVEHEGKTT…KKTAVPVTVE (112 aa)) enclose the sHSP domain.

This sequence belongs to the small heat shock protein (HSP20) family. In terms of assembly, exists as an oligomer.

The protein localises to the membrane. Functionally, may be a component of myofibrils where it acts as a stabilizer. This is Body wall muscle protein HR-29 from Halocynthia roretzi (Sea squirt).